The primary structure comprises 109 residues: Putative double-stranded DNA mimic protein YciU (109 aa).

The protein belongs to the putative dsDNA mimic protein family.

Its function is as follows. May act as a double-stranded DNA (dsDNA) mimic. Probably regulates the activity of a dsDNA-binding protein. This Escherichia coli O45:K1 (strain S88 / ExPEC) protein is Putative double-stranded DNA mimic protein YciU.